The primary structure comprises 100 residues: Signal recognition particle 19 kDa protein (100 aa).

The protein belongs to the SRP19 family. As to quaternary structure, part of the signal recognition particle protein translocation system, which is composed of SRP and FtsY. Archaeal SRP consists of a 7S RNA molecule of 300 nucleotides and two protein subunits: SRP54 and SRP19.

Its subcellular location is the cytoplasm. Its function is as follows. Involved in targeting and insertion of nascent membrane proteins into the cytoplasmic membrane. Binds directly to 7S RNA and mediates binding of the 54 kDa subunit of the SRP. In Pyrococcus furiosus (strain ATCC 43587 / DSM 3638 / JCM 8422 / Vc1), this protein is Signal recognition particle 19 kDa protein.